Here is a 396-residue protein sequence, read N- to C-terminus: Elongation factor Tu (396 aa).

The 196-residue stretch at 10-205 (KPHVNIGTIG…AVDESIPDPV (196 aa)) folds into the tr-type G domain. The tract at residues 19 to 26 (GHVDHGKT) is G1. 19–26 (GHVDHGKT) is a binding site for GTP. Threonine 26 lines the Mg(2+) pocket. Residues 62-66 (GITIN) form a G2 region. The G3 stretch occupies residues 83–86 (DAPG). Residues 83–87 (DAPGH) and 138–141 (NKAD) each bind GTP. Positions 138–141 (NKAD) are G4. A G5 region spans residues 175–177 (SAL).

Belongs to the TRAFAC class translation factor GTPase superfamily. Classic translation factor GTPase family. EF-Tu/EF-1A subfamily. Monomer.

Its subcellular location is the cytoplasm. It carries out the reaction GTP + H2O = GDP + phosphate + H(+). GTP hydrolase that promotes the GTP-dependent binding of aminoacyl-tRNA to the A-site of ribosomes during protein biosynthesis. This chain is Elongation factor Tu, found in Rhodococcus jostii (strain RHA1).